Here is a 383-residue protein sequence, read N- to C-terminus: uncharacterized protein (383 aa).

A signal peptide spans 1–23 (MKLTSIPIASTLLSLLAASGTLA).

Belongs to the but2 family.

It is found in the cytoplasm. It localises to the nucleus. This is an uncharacterized protein from Schizosaccharomyces pombe (strain 972 / ATCC 24843) (Fission yeast).